Reading from the N-terminus, the 51-residue chain is Lantibiotic flavucin (51 aa).

The propeptide occupies 1-20 (MSDFTLDFAEGDAADTVSPQ). The segment at residues 23-27 (SKSLC) is a cross-link (lanthionine (Ser-Cys)). Cross-links (beta-methyllanthionine (Thr-Cys)) lie at residues 28 to 31 (TPGC), 33 to 38 (TGWMMC), and 42 to 45 (TKGC).

It belongs to the type A lantibiotic family. Maturation of lantibiotics involves the enzymatic conversion of Thr, and Ser into dehydrated AA and the formation of thioether bonds with cysteine. This is followed by membrane translocation and cleavage of the modified precursor.

With respect to regulation, antimicrobial activity depends on the dehydration degree and integrity of flavucin. In terms of biological role, lanthionine-containing peptide antibiotic (lantibiotic) active on certain Gram-positive bacteria. The bactericidal activity of lantibiotics is based on depolarization of energized bacterial cytoplasmic membranes, initiated by the formation of aqueous transmembrane pores. Flavucin has high antimicrobial activity against several pathogenic bacteria such as S.aureus, E.faecalis, E.faecium and L.monocytogenes. Is also active against the Gram-negative P.aeruginosa. This chain is Lantibiotic flavucin, found in Corynebacterium lipophiloflavum (strain ATCC 700352 / DSM 44291 / CCUG 37336 / JCM 10383 / DMMZ 1944).